The chain runs to 427 residues: Enolase (427 aa).

A (2R)-2-phosphoglycerate-binding site is contributed by Q163. E205 functions as the Proton donor in the catalytic mechanism. Mg(2+) is bound by residues D242, E285, and D312. (2R)-2-phosphoglycerate contacts are provided by K337, R366, S367, and K388. The Proton acceptor role is filled by K337.

This sequence belongs to the enolase family. Requires Mg(2+) as cofactor.

Its subcellular location is the cytoplasm. The protein resides in the secreted. The protein localises to the cell surface. It catalyses the reaction (2R)-2-phosphoglycerate = phosphoenolpyruvate + H2O. It functions in the pathway carbohydrate degradation; glycolysis; pyruvate from D-glyceraldehyde 3-phosphate: step 4/5. Catalyzes the reversible conversion of 2-phosphoglycerate (2-PG) into phosphoenolpyruvate (PEP). It is essential for the degradation of carbohydrates via glycolysis. This Bradyrhizobium diazoefficiens (strain JCM 10833 / BCRC 13528 / IAM 13628 / NBRC 14792 / USDA 110) protein is Enolase.